The chain runs to 236 residues: 1-(5-phosphoribosyl)-5-[(5-phosphoribosylamino)methylideneamino] imidazole-4-carboxamide isomerase (236 aa).

D8 functions as the Proton acceptor in the catalytic mechanism. Residue D129 is the Proton donor of the active site.

The protein belongs to the HisA/HisF family.

It is found in the cytoplasm. It carries out the reaction 1-(5-phospho-beta-D-ribosyl)-5-[(5-phospho-beta-D-ribosylamino)methylideneamino]imidazole-4-carboxamide = 5-[(5-phospho-1-deoxy-D-ribulos-1-ylimino)methylamino]-1-(5-phospho-beta-D-ribosyl)imidazole-4-carboxamide. It participates in amino-acid biosynthesis; L-histidine biosynthesis; L-histidine from 5-phospho-alpha-D-ribose 1-diphosphate: step 4/9. The sequence is that of 1-(5-phosphoribosyl)-5-[(5-phosphoribosylamino)methylideneamino] imidazole-4-carboxamide isomerase from Methanocorpusculum labreanum (strain ATCC 43576 / DSM 4855 / Z).